We begin with the raw amino-acid sequence, 497 residues long: G protein-coupled receptor gprM (497 aa).

The N-linked (GlcNAc...) asparagine glycan is linked to Asn-3. Helical transmembrane passes span 66–86 (ISVA…VLPV), 98–118 (FTLG…PLGV), 138–158 (CAFT…WSFL), 179–199 (WGAL…MLIL), and 221–241 (YWIP…ATMA). Residue Asn-259 is glycosylated (N-linked (GlcNAc...) asparagine). Transmembrane regions (helical) follow at residues 293–313 (VTLV…FIEL) and 357–377 (LLLA…ILFA). Residue Asn-421 is glycosylated (N-linked (GlcNAc...) asparagine). The segment at 428 to 497 (YKSPSPMVRS…APAVYREYDD (70 aa)) is disordered.

Belongs to the G-protein coupled receptor GPR1/git3 family. In terms of assembly, interacts with gpaA.

The protein localises to the cell membrane. G protein-coupled receptor that plays a role in conidiation and regulation of the biosynthesis of secondary metabolites such as dihydroxynaphthalene (DHN)-melanin, via interaction with the G-protein complex alpha subunit gpaA. This is G protein-coupled receptor gprM from Aspergillus fumigatus (strain CBS 144.89 / FGSC A1163 / CEA10) (Neosartorya fumigata).